We begin with the raw amino-acid sequence, 193 residues long: dCTP deaminase (193 aa).

Residues 110 to 115, D128, 136 to 138, Y171, K178, and Q182 each bind dCTP; these read RSSLAR and VLE. The active-site Proton donor/acceptor is the E138. Residues 169-193 are disordered; sequence RPYNRRQDAKYKDQQGAVASRIDKD.

This sequence belongs to the dCTP deaminase family. Homotrimer.

The catalysed reaction is dCTP + H2O + H(+) = dUTP + NH4(+). It functions in the pathway pyrimidine metabolism; dUMP biosynthesis; dUMP from dCTP (dUTP route): step 1/2. Catalyzes the deamination of dCTP to dUTP. The sequence is that of dCTP deaminase from Pectobacterium atrosepticum (strain SCRI 1043 / ATCC BAA-672) (Erwinia carotovora subsp. atroseptica).